The sequence spans 468 residues: Argininosuccinate lyase (468 aa).

Belongs to the lyase 1 family. Argininosuccinate lyase subfamily.

It localises to the cytoplasm. The catalysed reaction is 2-(N(omega)-L-arginino)succinate = fumarate + L-arginine. It functions in the pathway amino-acid biosynthesis; L-arginine biosynthesis; L-arginine from L-ornithine and carbamoyl phosphate: step 3/3. The chain is Argininosuccinate lyase from Hahella chejuensis (strain KCTC 2396).